A 31-amino-acid polypeptide reads, in one-letter code: Cytochrome b6-f complex subunit 6 (31 aa).

Residues 4–24 (ITSYFGFLLVALTITSALFIG) form a helical membrane-spanning segment.

This sequence belongs to the PetL family. As to quaternary structure, the 4 large subunits of the cytochrome b6-f complex are cytochrome b6, subunit IV (17 kDa polypeptide, PetD), cytochrome f and the Rieske protein, while the 4 small subunits are PetG, PetL, PetM and PetN. The complex functions as a dimer.

Its subcellular location is the plastid. The protein resides in the chloroplast thylakoid membrane. Component of the cytochrome b6-f complex, which mediates electron transfer between photosystem II (PSII) and photosystem I (PSI), cyclic electron flow around PSI, and state transitions. PetL is important for photoautotrophic growth as well as for electron transfer efficiency and stability of the cytochrome b6-f complex. This Panax ginseng (Korean ginseng) protein is Cytochrome b6-f complex subunit 6.